A 203-amino-acid polypeptide reads, in one-letter code: Recombination protein RecR (203 aa).

The segment at 57–72 adopts a C4-type zinc-finger fold; that stretch reads CQRCRTLAETPLCSIC. The Toprim domain maps to 80–175; sequence GLLCVVESPA…RLSRLAYGVP (96 aa).

It belongs to the RecR family.

In terms of biological role, may play a role in DNA repair. It seems to be involved in an RecBC-independent recombinational process of DNA repair. It may act with RecF and RecO. This chain is Recombination protein RecR, found in Chromohalobacter salexigens (strain ATCC BAA-138 / DSM 3043 / CIP 106854 / NCIMB 13768 / 1H11).